Reading from the N-terminus, the 445-residue chain is Trigger factor (445 aa).

The 86-residue stretch at Gly164–Pro249 folds into the PPIase FKBP-type domain.

Belongs to the FKBP-type PPIase family. Tig subfamily.

The protein localises to the cytoplasm. The catalysed reaction is [protein]-peptidylproline (omega=180) = [protein]-peptidylproline (omega=0). In terms of biological role, involved in protein export. Acts as a chaperone by maintaining the newly synthesized protein in an open conformation. Functions as a peptidyl-prolyl cis-trans isomerase. The protein is Trigger factor of Psychrobacter sp. (strain PRwf-1).